Here is a 394-residue protein sequence, read N- to C-terminus: Flagellin A (394 aa).

The protein belongs to the bacterial flagellin family.

The protein resides in the secreted. It is found in the bacterial flagellum. Functionally, flagellin is the subunit protein which polymerizes to form the filaments of bacterial flagella. Homomer of FlaA is able to form a functional filament. This Rhizobium meliloti (strain 1021) (Ensifer meliloti) protein is Flagellin A (flaA).